A 327-amino-acid chain; its full sequence is Zinc transport protein ZntB (327 aa).

The Cytoplasmic segment spans residues 1 to 273; the sequence is MEAIKGSEVN…ARRTYTMSLM (273 aa). The helical transmembrane segment at 274-294 threads the bilayer; sequence AMVFLPSTFLTGLFGVNLGGI. Topologically, residues 295-300 are periplasmic; the sequence is PGGAWH. The helical transmembrane segment at 301 to 321 threads the bilayer; sequence FGFSMFCILLVVLIGGVTLWL. The Cytoplasmic segment spans residues 322–327; sequence HRSKWL.

It belongs to the CorA metal ion transporter (MIT) (TC 1.A.35) family.

It is found in the cell inner membrane. The catalysed reaction is Zn(2+)(out) + H(+)(out) = Zn(2+)(in) + H(+)(in). Zinc transporter. Acts as a Zn(2+):proton symporter, which likely mediates zinc ion uptake. This Citrobacter koseri (strain ATCC BAA-895 / CDC 4225-83 / SGSC4696) protein is Zinc transport protein ZntB.